The primary structure comprises 92 residues: Small ribosomal subunit protein uS19 (92 aa).

This sequence belongs to the universal ribosomal protein uS19 family.

Protein S19 forms a complex with S13 that binds strongly to the 16S ribosomal RNA. This is Small ribosomal subunit protein uS19 from Acholeplasma laidlawii (strain PG-8A).